A 105-amino-acid chain; its full sequence is Antitoxin HigA-1 (105 aa).

In terms of domain architecture, HTH cro/C1-type spans 15-69; the sequence is LKVEFLEPMGITSKALAEAMGVHRNTVSNLINGGVLTAPVAIKLAAALGNTPEFW. Positions 27–46 form a DNA-binding region, H-T-H motif; the sequence is SKALAEAMGVHRNTVSNLIN.

In terms of biological role, antitoxin component of a type II toxin-antitoxin (TA) system that counteracts the effect of the HigB-1 toxin. Binds to its own promoter and regulates transcription of the higB-1/higA-1 operon. This chain is Antitoxin HigA-1 (higA-1), found in Vibrio cholerae serotype O1 (strain ATCC 39315 / El Tor Inaba N16961).